The sequence spans 443 residues: MTHIQLDFSKTLEFFGEHELKQQQEIVKSIHKTIHEGTGAGSDFLGWIDLPVDYDKEEFSRIVEASKRIKENSDVLVVIGIGGSYLGARAAIEMLTSSFRNSNEYPEIVFVGNHLSSTYTKELVDYLADKDFSVNVISKSGTTTEPAVAFRLFKQLVEERYGKEEAQKRIFATTDKEKGALKQLATNEGYETFIVPDDVGGRYSVLTAVGLLPIATAGINIEAMMIGAAKAREELSSDKLEENIAYQYATIRNILYAKGYTTEMLINYEPSMQYFNEWWKQLFGESEGKDFKGIYPSSANYTTDLHSLGQYVQEGRRFLFETVVKVNHPKYDITIEKDSDDLDGLNYLAGKTIDEVNTKAFEGTLLAHTDGGVPNMVVNIPQLDEETFGYVVYFFELACAMSGYQLGVNPFNQPGVEAYKQNMFALLGKPGFEDLKKELEERL.

Glutamate 285 acts as the Proton donor in catalysis. Residues histidine 306 and lysine 420 contribute to the active site.

Belongs to the GPI family.

The protein resides in the cytoplasm. The enzyme catalyses alpha-D-glucose 6-phosphate = beta-D-fructose 6-phosphate. It participates in carbohydrate biosynthesis; gluconeogenesis. It functions in the pathway carbohydrate degradation; glycolysis; D-glyceraldehyde 3-phosphate and glycerone phosphate from D-glucose: step 2/4. Catalyzes the reversible isomerization of glucose-6-phosphate to fructose-6-phosphate. In Staphylococcus aureus (strain NCTC 8325 / PS 47), this protein is Glucose-6-phosphate isomerase.